We begin with the raw amino-acid sequence, 255 residues long: Cytochrome b561 and DOMON domain-containing protein At5g48750 (255 aa).

The first 27 residues, 1–27 (MFLSSRTIFVGLCFLFVLAPCFTRATT), serve as a signal peptide directing secretion. The DOMON domain maps to 54-169 (LDSFLHYSYV…TVVNHLWQDG (116 aa)). Positions 176-255 (RLGMHAMSGN…DPTWFYILIL (80 aa)) constitute a Cytochrome b561 domain. The chain crosses the membrane as a helical span at residues 216 to 236 (IHGLVNAVCWGIFIPIGVMAA).

It localises to the membrane. The protein is Cytochrome b561 and DOMON domain-containing protein At5g48750 of Arabidopsis thaliana (Mouse-ear cress).